Here is a 143-residue protein sequence, read N- to C-terminus: Putative pre-16S rRNA nuclease (143 aa).

Belongs to the YqgF nuclease family.

The protein localises to the cytoplasm. In terms of biological role, could be a nuclease involved in processing of the 5'-end of pre-16S rRNA. The polypeptide is Putative pre-16S rRNA nuclease (Crocosphaera subtropica (strain ATCC 51142 / BH68) (Cyanothece sp. (strain ATCC 51142))).